A 750-amino-acid chain; its full sequence is DDT domain-containing protein DDR4 (750 aa).

Residues 1 to 125 (MGSSSDIVPD…ITSLVPPPEP (125 aa)) form a disordered region. The segment covering 45-54 (RAQQRLQELQ) has biased composition (low complexity). Basic and acidic residues predominate over residues 55-77 (AAERKLKPPKKEYKREQHRRREE). The span at 78–100 (VVEEDEDSEDDDQEDEENDGDDE) shows a compositional bias: acidic residues. Residues 133 to 192 (LRSMWELASVLNFLHVFRPLLKINAEFSAEEFETALLTPNDTLSDIHIPLLKAIPPVTRM) form the DDT domain. Disordered regions lie at residues 450–505 (NGRS…TDFV) and 532–750 (LKKR…TDNS). The segment covering 451–471 (GRSTSSTHPTEPVNDTASGRS) has biased composition (polar residues). A compositionally biased stretch (acidic residues) spans 545 to 585 (EGDEEKGDEEYKWDEDNAEYEEEEEEEEEEDSLSASEEDSD). The span at 595–606 (RRETKLRSRSND) shows a compositional bias: basic and acidic residues. The span at 688–707 (NADTTNGKENNQLNKSNGTT) shows a compositional bias: polar residues. A compositionally biased stretch (basic and acidic residues) spans 741–750 (LKDDDKTDNS).

As to quaternary structure, interacts (via the DDT domain) with CHR11 (via C-terminus).

The protein localises to the nucleus. In terms of biological role, probable transcription regulator. The protein is DDT domain-containing protein DDR4 of Arabidopsis thaliana (Mouse-ear cress).